A 487-amino-acid polypeptide reads, in one-letter code: GPI mannosyltransferase 1 (487 aa).

A run of 3 helical transmembrane segments spans residues 26–46 (PLPL…YGLW), 87–107 (ILAW…GPWA), and 121–141 (VLFA…LVMG). The interval 147 to 175 (SAAKGKEKDTEKTKEGGKKGPSVTASTGM) is disordered. Residues 150 to 164 (KGKEKDTEKTKEGGK) are compositionally biased toward basic and acidic residues. 7 helical membrane-spanning segments follow: residues 205–225 (LLGV…ITLA), 227–247 (LLLG…PAIV), 289–309 (LLLA…MYRL), 359–379 (IESL…PLTL), 393–413 (FAFV…YLVL), 429–449 (MGLV…QQAY), and 462–482 (GLWM…GVIV).

Belongs to the PIGM family.

It is found in the endoplasmic reticulum membrane. It participates in glycolipid biosynthesis; glycosylphosphatidylinositol-anchor biosynthesis. In terms of biological role, mannosyltransferase involved in glycosylphosphatidylinositol-anchor biosynthesis. Transfers the first alpha-1,4-mannose to GlcN-acyl-PI during GPI precursor assembly. Required for cell wall integrity. This is GPI mannosyltransferase 1 (gim-1) from Neurospora crassa (strain ATCC 24698 / 74-OR23-1A / CBS 708.71 / DSM 1257 / FGSC 987).